We begin with the raw amino-acid sequence, 215 residues long: Enolase-phosphatase E1 (215 aa).

Positions 11 and 13 each coordinate Mg(2+). Residues 117-118 and Lys151 contribute to the substrate site; that span reads SS. A Mg(2+)-binding site is contributed by Asp174.

Belongs to the HAD-like hydrolase superfamily. MasA/MtnC family. In terms of assembly, monomer. The cofactor is Mg(2+).

Its subcellular location is the cytoplasm. It is found in the nucleus. The catalysed reaction is 5-methylsulfanyl-2,3-dioxopentyl phosphate + H2O = 1,2-dihydroxy-5-(methylsulfanyl)pent-1-en-3-one + phosphate. It participates in amino-acid biosynthesis; L-methionine biosynthesis via salvage pathway; L-methionine from S-methyl-5-thio-alpha-D-ribose 1-phosphate: step 3/6. Its pathway is amino-acid biosynthesis; L-methionine biosynthesis via salvage pathway; L-methionine from S-methyl-5-thio-alpha-D-ribose 1-phosphate: step 4/6. Functionally, bifunctional enzyme that catalyzes the enolization of 2,3-diketo-5-methylthiopentyl-1-phosphate (DK-MTP-1-P) into the intermediate 2-hydroxy-3-keto-5-methylthiopentenyl-1-phosphate (HK-MTPenyl-1-P), which is then dephosphorylated to form the acireductone 1,2-dihydroxy-3-keto-5-methylthiopentene (DHK-MTPene). The protein is Enolase-phosphatase E1 (utr4) of Schizosaccharomyces japonicus (strain yFS275 / FY16936) (Fission yeast).